A 74-amino-acid chain; its full sequence is U4-theraphotoxin-Cg1a (74 aa).

The first 19 residues, 1-19 (MNATIFALLLLLNLAMHNA), serve as a signal peptide directing secretion. A propeptide spanning residues 20 to 39 (AEQSSETDMDDTLLIPEINR) is cleaved from the precursor. 3 disulfide bridges follow: Cys-42–Cys-56, Cys-49–Cys-61, and Cys-55–Cys-71.

This sequence belongs to the neurotoxin 36 family. 01 subfamily. Expressed by the venom gland.

Its subcellular location is the secreted. Its function is as follows. Probable ion channel inhibitor. The chain is U4-theraphotoxin-Cg1a from Chilobrachys guangxiensis (Chinese earth tiger tarantula).